Consider the following 267-residue polypeptide: Orotidine 5'-phosphate decarboxylase (267 aa).

Lys-93 acts as the Proton donor in catalysis.

The protein belongs to the OMP decarboxylase family. Type 2 subfamily.

The enzyme catalyses orotidine 5'-phosphate + H(+) = UMP + CO2. It participates in pyrimidine metabolism; UMP biosynthesis via de novo pathway; UMP from orotate: step 2/2. The protein is Orotidine 5'-phosphate decarboxylase of Halobacterium salinarum (strain ATCC 29341 / DSM 671 / R1).